Reading from the N-terminus, the 637-residue chain is Phospholipase B (637 aa).

The N-terminal stretch at 1 to 19 is a signal peptide; sequence MSIITTAFALSLLATTAFA. A PLA2c domain is found at 46 to 572; sequence DCPSNVTWIR…DTWCWAGDDN (527 aa). Residues asparagine 50, asparagine 56, asparagine 122, asparagine 231, asparagine 246, asparagine 272, asparagine 314, asparagine 343, asparagine 387, asparagine 433, asparagine 481, asparagine 501, asparagine 528, asparagine 553, asparagine 572, asparagine 594, and asparagine 606 are each glycosylated (N-linked (GlcNAc...) asparagine).

It belongs to the lysophospholipase family. Post-translationally, N-glycosylated.

It localises to the secreted. The enzyme catalyses a 1-acyl-sn-glycero-3-phosphocholine + H2O = sn-glycerol 3-phosphocholine + a fatty acid + H(+). In terms of biological role, exhibits phospholipase B (PLB), lysophospholipase (LPL) and lysophospholipase/transacylase (LPTA) activities. This is Phospholipase B (PLB1) from Cryptococcus neoformans var. neoformans serotype D (strain B-3501A) (Filobasidiella neoformans).